We begin with the raw amino-acid sequence, 367 residues long: Leucine carboxyl methyltransferase 1 (367 aa).

S-adenosyl-L-methionine contacts are provided by residues Arg84, Gly109, Asp132, 187–188 (DL), and Glu212.

Belongs to the methyltransferase superfamily. LCMT family.

The catalysed reaction is [phosphatase 2A protein]-C-terminal L-leucine + S-adenosyl-L-methionine = [phosphatase 2A protein]-C-terminal L-leucine methyl ester + S-adenosyl-L-homocysteine. In terms of biological role, methylates the carboxyl group of the C-terminal leucine residue of protein phosphatase 2A catalytic subunits to form alpha-leucine ester residues. In Candida albicans (strain SC5314 / ATCC MYA-2876) (Yeast), this protein is Leucine carboxyl methyltransferase 1 (PPM1).